The chain runs to 91 residues: Potassium channel toxin MeuTXK-beta-1 (91 aa).

Positions Met-1–Cys-19 are cleaved as a signal peptide. Positions Gln-54 to Phe-91 constitute a BetaSPN-type CS-alpha/beta domain. Cystine bridges form between Cys-57–Cys-78, Cys-64–Cys-83, and Cys-68–Cys-85.

As to expression, expressed by the venom gland.

Its subcellular location is the secreted. In terms of biological role, has a low affinity binding to potassium channels of rat brain synaptosomes. Displays weak antibacterial activity against Stenotrophomonas sp. Strongly inhibits the development of the Plasmodium berghei ookinetes. Displays slight hemolytic effect on mouse erythrocytes. Induces cytolysis on Xenopus oocytes at high concentrations. Is not toxic towards mice and towards the insect Tenebrio molitor. This Mesobuthus eupeus (Lesser Asian scorpion) protein is Potassium channel toxin MeuTXK-beta-1.